We begin with the raw amino-acid sequence, 485 residues long: Ribulose bisphosphate carboxylase large chain 2 (485 aa).

Substrate is bound by residues asparagine 125 and threonine 175. The Proton acceptor role is filled by lysine 177. Lysine 179 contacts substrate. Mg(2+)-binding residues include lysine 203, aspartate 205, and glutamate 206. Residue lysine 203 is modified to N6-carboxylysine. Histidine 295 functions as the Proton acceptor in the catalytic mechanism. 3 residues coordinate substrate: arginine 296, histidine 328, and serine 380.

The protein belongs to the RuBisCO large chain family. Type I subfamily. As to quaternary structure, heterohexadecamer of 8 large chains and 8 small chains. The cofactor is Mg(2+).

The catalysed reaction is 2 (2R)-3-phosphoglycerate + 2 H(+) = D-ribulose 1,5-bisphosphate + CO2 + H2O. It carries out the reaction D-ribulose 1,5-bisphosphate + O2 = 2-phosphoglycolate + (2R)-3-phosphoglycerate + 2 H(+). Its function is as follows. RuBisCO catalyzes two reactions: the carboxylation of D-ribulose 1,5-bisphosphate, the primary event in carbon dioxide fixation, as well as the oxidative fragmentation of the pentose substrate. Both reactions occur simultaneously and in competition at the same active site. In Methylibium petroleiphilum (strain ATCC BAA-1232 / LMG 22953 / PM1), this protein is Ribulose bisphosphate carboxylase large chain 2.